The primary structure comprises 454 residues: Retinoblastoma-binding protein homolog 5 (454 aa).

6 WD repeats span residues 23 to 64 (LQNA…RTFS), 65 to 104 (AHCL…LLHR), 153 to 192 (SSDE…CVAW), 196 to 235 (NTVQ…HQRG), 248 to 288 (VNKA…LIKI), and 292 to 330 (NKGE…NWSA).

Component of the SET2 complex (also known as the SET1/COMPASS complex), which contains at least set-2, swd-2.1, cfp-1, rbbp-5, wdr-5.1, dpy-30 and ash-2.

It localises to the nucleus. In terms of biological role, required for di- and trimethylation at 'Lys-4' of histone H3. Regulates left/right asymmetry of ASE sensory neurons, via its role as a component of the SET2 complex. This Caenorhabditis elegans protein is Retinoblastoma-binding protein homolog 5 (rbbp-5).